Here is a 716-residue protein sequence, read N- to C-terminus: Polyribonucleotide nucleotidyltransferase (716 aa).

Asp480 and Asp486 together coordinate Mg(2+). The KH domain occupies 547–606 (PKIVQLQIDIDKISLVIGSTGKTVKAITDEFEVKVQIEQNGKIILFGDDDFKMQKAKERI). An S1 motif domain is found at 616–711 (GEIYEGTVKK…KFGKIDLEIV (96 aa)).

The protein belongs to the polyribonucleotide nucleotidyltransferase family. Mg(2+) serves as cofactor.

Its subcellular location is the cytoplasm. It carries out the reaction RNA(n+1) + phosphate = RNA(n) + a ribonucleoside 5'-diphosphate. Involved in mRNA degradation. Catalyzes the phosphorolysis of single-stranded polyribonucleotides processively in the 3'- to 5'-direction. The polypeptide is Polyribonucleotide nucleotidyltransferase (Borreliella burgdorferi (strain ATCC 35210 / DSM 4680 / CIP 102532 / B31) (Borrelia burgdorferi)).